The chain runs to 268 residues: Small ribosomal subunit protein uS2 (268 aa).

The interval 233-268 (SVREEEFAEAAAEGEEKPARRAPAKKAAKKGDDAQA) is disordered.

Belongs to the universal ribosomal protein uS2 family.

This chain is Small ribosomal subunit protein uS2, found in Stenotrophomonas maltophilia (strain K279a).